Reading from the N-terminus, the 392-residue chain is Probable tRNA sulfurtransferase (392 aa).

One can recognise a THUMP domain in the interval 61–168 (DEALKLLSKV…EFTYIYSEII (108 aa)). Residues 185–186 (LL), 210–211 (HF), Arg-267, Gly-289, and Gln-298 each bind ATP.

Belongs to the ThiI family.

It is found in the cytoplasm. It catalyses the reaction [ThiI sulfur-carrier protein]-S-sulfanyl-L-cysteine + a uridine in tRNA + 2 reduced [2Fe-2S]-[ferredoxin] + ATP + H(+) = [ThiI sulfur-carrier protein]-L-cysteine + a 4-thiouridine in tRNA + 2 oxidized [2Fe-2S]-[ferredoxin] + AMP + diphosphate. The catalysed reaction is [ThiS sulfur-carrier protein]-C-terminal Gly-Gly-AMP + S-sulfanyl-L-cysteinyl-[cysteine desulfurase] + AH2 = [ThiS sulfur-carrier protein]-C-terminal-Gly-aminoethanethioate + L-cysteinyl-[cysteine desulfurase] + A + AMP + 2 H(+). It functions in the pathway cofactor biosynthesis; thiamine diphosphate biosynthesis. Its function is as follows. Catalyzes the ATP-dependent transfer of a sulfur to tRNA to produce 4-thiouridine in position 8 of tRNAs, which functions as a near-UV photosensor. Also catalyzes the transfer of sulfur to the sulfur carrier protein ThiS, forming ThiS-thiocarboxylate. This is a step in the synthesis of thiazole, in the thiamine biosynthesis pathway. The sulfur is donated as persulfide by IscS. The protein is Probable tRNA sulfurtransferase of Acetivibrio thermocellus (strain ATCC 27405 / DSM 1237 / JCM 9322 / NBRC 103400 / NCIMB 10682 / NRRL B-4536 / VPI 7372) (Clostridium thermocellum).